Reading from the N-terminus, the 299-residue chain is Endonuclease G, mitochondrial (299 aa).

The N-terminal 48 residues, 1 to 48, are a transit peptide targeting the mitochondrion; it reads MQLLRAGLTLALGAGLGAAAESWWRQRADARATPGLLSRLPVLPVAAA. Thr130 carries the phosphothreonine modification. His143 acts as the Proton acceptor in catalysis. Residue Asn174 participates in Mg(2+) binding. Positions 288–298 are essential for deoxyribonuclease activity; sequence AGSLKAITAGS. Position 290 is a phosphoserine (Ser290).

It belongs to the DNA/RNA non-specific endonuclease family. In terms of assembly, homodimer; disulfide-linked. Homodimerization is essential for its activity. Interacts with YWHAG. Requires Mg(2+) as cofactor. Post-translationally, GSK3-beta-mediated dual phosphorylations at Thr-130 and Ser-290 is necessary for its interaction with YWHAG and the induction of autophagy.

It is found in the mitochondrion. Endonuclease that preferentially catalyzes the cleavage of double-stranded 5-hydroxymethylcytosine (5hmC)-modified DNA. The 5hmC-modified nucleotide does not increase the binding affinity, but instead increases the efficiency of cutting and specifies the site of cleavage for the modified DNAs. Shows significantly higher affinity for four- stranded Holliday junction over duplex and single-stranded DNAs. Promotes conservative recombination when the DNA is 5hmC-modified. Promotes autophagy through the suppression of mTOR by its phosphorylation-mediated interaction with YWHAG and its endonuclease activity-mediated DNA damage response. GSK3-beta mediated phosphorylation of ENDOG enhances its interaction with YWHAG, leading to the release of TSC2 and PIK3C3 from YWHAG resulting in mTOR pathway suppression and autophagy initiation. Promotes cleavage of mtDNA in response to oxidative and nitrosative stress, in turn inducing compensatory mtDNA replication. In Bos taurus (Bovine), this protein is Endonuclease G, mitochondrial (ENDOG).